We begin with the raw amino-acid sequence, 103 residues long: Serine protease inhibitor 4 (103 aa).

A disulfide bridge connects residues C56 and C73.

Belongs to the protease inhibitor I3 (leguminous Kunitz-type inhibitor) family.

It is found in the vacuole. In terms of biological role, inhibitor of serine protease. May protect the plant by inhibiting proteases of invading organisms. The sequence is that of Serine protease inhibitor 4 from Solanum tuberosum (Potato).